Consider the following 245-residue polypeptide: 1-(5-phosphoribosyl)-5-[(5-phosphoribosylamino)methylideneamino] imidazole-4-carboxamide isomerase (245 aa).

Catalysis depends on aspartate 7, which acts as the Proton acceptor. The Proton donor role is filled by aspartate 129.

The protein belongs to the HisA/HisF family.

It localises to the cytoplasm. The enzyme catalyses 1-(5-phospho-beta-D-ribosyl)-5-[(5-phospho-beta-D-ribosylamino)methylideneamino]imidazole-4-carboxamide = 5-[(5-phospho-1-deoxy-D-ribulos-1-ylimino)methylamino]-1-(5-phospho-beta-D-ribosyl)imidazole-4-carboxamide. It participates in amino-acid biosynthesis; L-histidine biosynthesis; L-histidine from 5-phospho-alpha-D-ribose 1-diphosphate: step 4/9. This chain is 1-(5-phosphoribosyl)-5-[(5-phosphoribosylamino)methylideneamino] imidazole-4-carboxamide isomerase, found in Klebsiella pneumoniae subsp. pneumoniae (strain ATCC 700721 / MGH 78578).